The chain runs to 215 residues: Adenylate kinase (215 aa).

Glycine 10–threonine 15 lines the ATP pocket. The segment at serine 30–valine 59 is NMP. Residues threonine 31, arginine 36, glycine 57–valine 59, glycine 85–arginine 88, and glutamine 92 contribute to the AMP site. Residues glycine 122–aspartate 159 form an LID region. Residues arginine 123 and threonine 132–tyrosine 133 each bind ATP. 2 residues coordinate AMP: arginine 156 and arginine 167. ATP is bound at residue glutamine 200.

Belongs to the adenylate kinase family. As to quaternary structure, monomer.

It is found in the cytoplasm. The enzyme catalyses AMP + ATP = 2 ADP. Its pathway is purine metabolism; AMP biosynthesis via salvage pathway; AMP from ADP: step 1/1. Its function is as follows. Catalyzes the reversible transfer of the terminal phosphate group between ATP and AMP. Plays an important role in cellular energy homeostasis and in adenine nucleotide metabolism. This chain is Adenylate kinase, found in Neisseria meningitidis serogroup C (strain 053442).